Reading from the N-terminus, the 260-residue chain is 3'-5' ssDNA/RNA exonuclease TatD (260 aa).

Positions 91, 127, and 152 each coordinate a divalent metal cation.

Belongs to the metallo-dependent hydrolases superfamily. TatD-type hydrolase family. TatD subfamily. Monomer. Requires Mg(2+) as cofactor.

Its subcellular location is the cytoplasm. In terms of biological role, 3'-5' exonuclease that prefers single-stranded DNA and RNA. May play a role in the H(2)O(2)-induced DNA damage repair. The sequence is that of 3'-5' ssDNA/RNA exonuclease TatD from Enterobacter sp. (strain 638).